A 437-amino-acid polypeptide reads, in one-letter code: Asparagine--tRNA ligase (437 aa).

This sequence belongs to the class-II aminoacyl-tRNA synthetase family. In terms of assembly, homodimer.

Its subcellular location is the cytoplasm. The enzyme catalyses tRNA(Asn) + L-asparagine + ATP = L-asparaginyl-tRNA(Asn) + AMP + diphosphate + H(+). In Symbiobacterium thermophilum (strain DSM 24528 / JCM 14929 / IAM 14863 / T), this protein is Asparagine--tRNA ligase.